We begin with the raw amino-acid sequence, 446 residues long: Casein kinase I homolog 1 (446 aa).

In terms of domain architecture, Protein kinase spans 12–274 (YKVGRRIGEG…FDATPDYDYL (263 aa)). Residues 18 to 26 (IGEGSFGVI) and Lys41 contribute to the ATP site. Asp131 functions as the Proton acceptor in the catalytic mechanism. Residues 308 to 430 (KSRNAETENQ…ETEAPKKKKS (123 aa)) form a disordered region. Phosphoserine is present on Ser329. A compositionally biased stretch (polar residues) spans 332-345 (PALQNHASTQNVVS). Residues 346 to 355 (KRSDYEKPFA) show a composition bias toward basic and acidic residues. Polar residues predominate over residues 360–397 (NSASDSAEPNQNSLPNPPTETKATTTVPDRSGLATNQP). Over residues 401 to 412 (DVHDSSEERVTR) the composition is skewed to basic and acidic residues.

This sequence belongs to the protein kinase superfamily. CK1 Ser/Thr protein kinase family. Casein kinase I subfamily.

It is found in the cytoplasm. It catalyses the reaction L-seryl-[protein] + ATP = O-phospho-L-seryl-[protein] + ADP + H(+). It carries out the reaction L-threonyl-[protein] + ATP = O-phospho-L-threonyl-[protein] + ADP + H(+). In terms of biological role, casein kinases are operationally defined by their preferential utilization of acidic proteins such as caseins as substrates. The protein is Casein kinase I homolog 1 (cki1) of Schizosaccharomyces pombe (strain 972 / ATCC 24843) (Fission yeast).